Consider the following 606-residue polypeptide: Aspartate--tRNA(Asp/Asn) ligase (606 aa).

Residue Glu-177 coordinates L-aspartate. The tract at residues 201–204 is aspartate; the sequence is QLFK. L-aspartate is bound at residue Arg-223. Residues 223–225 and Gln-232 each bind ATP; that span reads RDE. His-461 serves as a coordination point for L-aspartate. Glu-499 provides a ligand contact to ATP. Arg-506 serves as a coordination point for L-aspartate. 551–554 contacts ATP; it reads GLDR.

The protein belongs to the class-II aminoacyl-tRNA synthetase family. Type 1 subfamily. As to quaternary structure, homodimer.

The protein localises to the cytoplasm. It carries out the reaction tRNA(Asx) + L-aspartate + ATP = L-aspartyl-tRNA(Asx) + AMP + diphosphate. Functionally, aspartyl-tRNA synthetase with relaxed tRNA specificity since it is able to aspartylate not only its cognate tRNA(Asp) but also tRNA(Asn). Reaction proceeds in two steps: L-aspartate is first activated by ATP to form Asp-AMP and then transferred to the acceptor end of tRNA(Asp/Asn). This Prochlorococcus marinus (strain NATL2A) protein is Aspartate--tRNA(Asp/Asn) ligase.